The primary structure comprises 115 residues: C-type natriuretic peptide prohormone (115 aa).

Residues 24–49 (PSDELNNEAEEMSPAASLPELNADQS) form a disordered region. Cys99 and Cys115 are joined by a disulfide.

It belongs to the natriuretic peptide family. As to expression, CNP-115 is differentially processed to produce CNP-38 and CNP-39 in the heart and CNP-22 in the brain.

The protein resides in the secreted. Hormone which may be vasoactive and natriuretic. Has a cGMP-stimulating activity. This chain is C-type natriuretic peptide prohormone, found in Scyliorhinus canicula (Small-spotted catshark).